The following is a 276-amino-acid chain: Undecaprenyl-diphosphatase (276 aa).

8 consecutive transmembrane segments (helical) span residues 1 to 21 (MSWL…FLPV), 39 to 59 (AGAS…LVYF), 84 to 104 (YWLG…GLLF), 115 to 135 (LWLV…AEYA), 159 to 179 (LALV…LFLG), 190 to 210 (FLLA…DAFA), 222 to 242 (QLLV…AWFL), and 253 to 273 (FVGY…TGVV).

Belongs to the UppP family.

Its subcellular location is the cell membrane. The catalysed reaction is di-trans,octa-cis-undecaprenyl diphosphate + H2O = di-trans,octa-cis-undecaprenyl phosphate + phosphate + H(+). In terms of biological role, catalyzes the dephosphorylation of undecaprenyl diphosphate (UPP). Confers resistance to bacitracin. The chain is Undecaprenyl-diphosphatase from Mycolicibacterium gilvum (strain PYR-GCK) (Mycobacterium gilvum (strain PYR-GCK)).